Reading from the N-terminus, the 258-residue chain is UPF0246 protein NTHI1156 (258 aa).

The protein belongs to the UPF0246 family.

This chain is UPF0246 protein NTHI1156, found in Haemophilus influenzae (strain 86-028NP).